A 213-amino-acid polypeptide reads, in one-letter code: 2-dehydro-3-deoxy-phosphogluconate aldolase (213 aa).

E45 acts as the Proton acceptor in catalysis. Positions 49, 73, and 133 each coordinate pyruvate. The active-site Schiff-base intermediate with substrate is K133.

Belongs to the KHG/KDPG aldolase family. As to quaternary structure, homotrimer.

Its subcellular location is the cytoplasm. It catalyses the reaction 2-dehydro-3-deoxy-6-phospho-D-gluconate = D-glyceraldehyde 3-phosphate + pyruvate. It participates in carbohydrate acid metabolism; 2-dehydro-3-deoxy-D-gluconate degradation; D-glyceraldehyde 3-phosphate and pyruvate from 2-dehydro-3-deoxy-D-gluconate: step 2/2. Involved in the degradation of glucose via the Entner-Doudoroff pathway. Catalyzes the reversible, stereospecific retro-aldol cleavage of 2-keto-3-deoxy-6-phosphogluconate (KDPG) to pyruvate and D-glyceraldehyde-3-phosphate. The chain is 2-dehydro-3-deoxy-phosphogluconate aldolase (eda) from Dickeya dadantii (strain 3937) (Erwinia chrysanthemi (strain 3937)).